Here is a 222-residue protein sequence, read N- to C-terminus: DnaJ homolog subfamily B member 9 (222 aa).

Positions 1-23 (MATPQSVFVFAICILMITELILA) are cleaved as a signal peptide. The J domain occupies 26–90 (NYYDILGVPK…NRRKEYDIIG (65 aa)). A divergent targeting domain region spans residues 91-222 (HSAFTNGKGQ…VTTYTDCSGQ (132 aa)). Ser133 bears the Phosphoserine mark.

As to quaternary structure, interacts with HSPA5/BiP; interaction is direct. Interacts with ERN1/IRE1 (via the luminal region). Interacts with DERL1.

It is found in the endoplasmic reticulum lumen. In terms of biological role, co-chaperone for Hsp70 protein HSPA5/BiP that acts as a key repressor of the ERN1/IRE1-mediated unfolded protein response (UPR). J domain-containing co-chaperones stimulate the ATPase activity of Hsp70 proteins and are required for efficient substrate recognition by Hsp70 proteins. In the unstressed endoplasmic reticulum, interacts with the luminal region of ERN1/IRE1 and selectively recruits HSPA5/BiP: HSPA5/BiP disrupts the dimerization of the active ERN1/IRE1 luminal region, thereby inactivating ERN1/IRE1. Also involved in endoplasmic reticulum-associated degradation (ERAD) of misfolded proteins. Required for survival of B-cell progenitors and normal antibody production. The chain is DnaJ homolog subfamily B member 9 from Rattus norvegicus (Rat).